The sequence spans 437 residues: Glutamyl-tRNA reductase (437 aa).

Substrate-binding positions include 49–52 (TCNR), S109, 114–116 (EGQ), and Q120. The Nucleophile role is filled by C50. 198–203 (GAGRMS) provides a ligand contact to NADP(+).

The protein belongs to the glutamyl-tRNA reductase family. Homodimer.

It carries out the reaction (S)-4-amino-5-oxopentanoate + tRNA(Glu) + NADP(+) = L-glutamyl-tRNA(Glu) + NADPH + H(+). The protein operates within porphyrin-containing compound metabolism; protoporphyrin-IX biosynthesis; 5-aminolevulinate from L-glutamyl-tRNA(Glu): step 1/2. It participates in porphyrin-containing compound metabolism; chlorophyll biosynthesis. Catalyzes the NADPH-dependent reduction of glutamyl-tRNA(Glu) to glutamate 1-semialdehyde (GSA). The polypeptide is Glutamyl-tRNA reductase (Synechococcus sp. (strain CC9311)).